The following is a 189-amino-acid chain: Large ribosomal subunit protein bL9 (189 aa).

Belongs to the bacterial ribosomal protein bL9 family.

In terms of biological role, binds to the 23S rRNA. The polypeptide is Large ribosomal subunit protein bL9 (Methylocella silvestris (strain DSM 15510 / CIP 108128 / LMG 27833 / NCIMB 13906 / BL2)).